Consider the following 167-residue polypeptide: Transcription initiation factor TFIID subunit 10 (167 aa).

Disordered regions lie at residues Met1–Glu56 and Thr119–Asp139. Acidic residues predominate over residues Glu41–Glu56. Over residues Ser130–Asp139 the composition is skewed to basic and acidic residues.

This sequence belongs to the TAF10 family. In terms of assembly, belongs to the TFIID complex which is composed of TATA binding protein (Tbp) and a number of TBP-associated factors (TAFs). Also a member of the histone acetylase (HAT) complex. As to expression, at embryonic stage 9, highest expression is detected within the ectoderm, ventral chord, and anterior foregut primordium. Later in development preferential expression is in the foregut, proventriculus, and central nervous system. Coexpressed with Taf10b in the lateral epidermis and anal plate.

The protein resides in the cytoplasm. It is found in the nucleus. Its function is as follows. TFIID is a multimeric protein complex that plays a central role in mediating promoter responses to various activators and repressors. This chain is Transcription initiation factor TFIID subunit 10, found in Drosophila melanogaster (Fruit fly).